We begin with the raw amino-acid sequence, 121 residues long: Large ribosomal subunit protein bL20 (121 aa).

This sequence belongs to the bacterial ribosomal protein bL20 family.

Its function is as follows. Binds directly to 23S ribosomal RNA and is necessary for the in vitro assembly process of the 50S ribosomal subunit. It is not involved in the protein synthesizing functions of that subunit. The polypeptide is Large ribosomal subunit protein bL20 (Roseobacter denitrificans (strain ATCC 33942 / OCh 114) (Erythrobacter sp. (strain OCh 114))).